A 306-amino-acid chain; its full sequence is L-lactate dehydrogenase (306 aa).

NAD(+)-binding positions include V11, D32, K37, and G76–A77. The substrate site is built by Q79 and R85. NAD(+) is bound by residues S98, V115–N117, and S140. N117–D120 lines the substrate pocket. Residue D145–R148 coordinates substrate. Beta-D-fructose 1,6-bisphosphate-binding residues include R150 and H165. The Proton acceptor role is filled by H172. Y214 is modified (phosphotyrosine). Residue T223 coordinates substrate.

The protein belongs to the LDH/MDH superfamily. LDH family. Homotetramer.

The protein resides in the cytoplasm. The enzyme catalyses (S)-lactate + NAD(+) = pyruvate + NADH + H(+). It participates in fermentation; pyruvate fermentation to lactate; (S)-lactate from pyruvate: step 1/1. Allosterically activated by fructose 1,6-bisphosphate (FBP). In terms of biological role, catalyzes the conversion of lactate to pyruvate. This Synechococcus sp. (strain JA-3-3Ab) (Cyanobacteria bacterium Yellowstone A-Prime) protein is L-lactate dehydrogenase.